The following is a 533-amino-acid chain: Glucose-6-phosphate isomerase (533 aa).

Glu-341 acts as the Proton donor in catalysis. Active-site residues include His-372 and Lys-501.

Belongs to the GPI family.

It localises to the cytoplasm. It carries out the reaction alpha-D-glucose 6-phosphate = beta-D-fructose 6-phosphate. It functions in the pathway carbohydrate biosynthesis; gluconeogenesis. The protein operates within carbohydrate degradation; glycolysis; D-glyceraldehyde 3-phosphate and glycerone phosphate from D-glucose: step 2/4. Catalyzes the reversible isomerization of glucose-6-phosphate to fructose-6-phosphate. The protein is Glucose-6-phosphate isomerase of Cereibacter sphaeroides (strain ATCC 17023 / DSM 158 / JCM 6121 / CCUG 31486 / LMG 2827 / NBRC 12203 / NCIMB 8253 / ATH 2.4.1.) (Rhodobacter sphaeroides).